The sequence spans 159 residues: IQ domain-containing protein J (159 aa).

Residues 47 to 67 (ESKVKIIQRAWREYLQRQEPL) form the IQ domain. Residues 63-88 (RQEPLGKRSPSPPSVSSEKLSSSVSM) form a disordered region. A compositionally biased stretch (low complexity) spans 76–87 (SVSSEKLSSSVS).

The sequence is that of IQ domain-containing protein J from Homo sapiens (Human).